The sequence spans 460 residues: Proline--tRNA ligase (460 aa).

Belongs to the class-II aminoacyl-tRNA synthetase family. ProS type 3 subfamily. Homodimer.

It is found in the cytoplasm. It catalyses the reaction tRNA(Pro) + L-proline + ATP = L-prolyl-tRNA(Pro) + AMP + diphosphate. Its function is as follows. Catalyzes the attachment of proline to tRNA(Pro) in a two-step reaction: proline is first activated by ATP to form Pro-AMP and then transferred to the acceptor end of tRNA(Pro). The polypeptide is Proline--tRNA ligase (Methanococcus maripaludis (strain DSM 14266 / JCM 13030 / NBRC 101832 / S2 / LL)).